A 643-amino-acid chain; its full sequence is Phosphomethylpyrimidine synthase (643 aa).

Substrate-binding positions include Asn248, Met277, Tyr306, His342, 362–364, 403–406, and Glu442; these read SRG and DGLR. Residue His446 participates in Zn(2+) binding. A substrate-binding site is contributed by Tyr469. His510 lines the Zn(2+) pocket. 3 residues coordinate [4Fe-4S] cluster: Cys590, Cys593, and Cys598.

Belongs to the ThiC family. As to quaternary structure, homodimer. [4Fe-4S] cluster is required as a cofactor.

The catalysed reaction is 5-amino-1-(5-phospho-beta-D-ribosyl)imidazole + S-adenosyl-L-methionine = 4-amino-2-methyl-5-(phosphooxymethyl)pyrimidine + CO + 5'-deoxyadenosine + formate + L-methionine + 3 H(+). The protein operates within cofactor biosynthesis; thiamine diphosphate biosynthesis. In terms of biological role, catalyzes the synthesis of the hydroxymethylpyrimidine phosphate (HMP-P) moiety of thiamine from aminoimidazole ribotide (AIR) in a radical S-adenosyl-L-methionine (SAM)-dependent reaction. The sequence is that of Phosphomethylpyrimidine synthase from Paraburkholderia phytofirmans (strain DSM 17436 / LMG 22146 / PsJN) (Burkholderia phytofirmans).